Consider the following 124-residue polypeptide: Fluoride-specific ion channel FluC 2 (124 aa).

A run of 4 helical transmembrane segments spans residues 9–29 (LGIFLAAMLGGLVRYLVSTWL), 34–54 (DFPWGTLFVNYLGIFCLIFLV), 67–87 (LILALGTGFCGGLTTFSSLML), and 99–119 (FSLVLYLLLSIGGGLLLAYFL). The Na(+) site is built by Gly-77 and Thr-80.

The protein belongs to the fluoride channel Fluc/FEX (TC 1.A.43) family.

Its subcellular location is the cell membrane. The enzyme catalyses fluoride(in) = fluoride(out). With respect to regulation, na(+) is not transported, but it plays an essential structural role and its presence is essential for fluoride channel function. Its function is as follows. Fluoride-specific ion channel. Important for reducing fluoride concentration in the cell, thus reducing its toxicity. This is Fluoride-specific ion channel FluC 2 from Streptococcus pneumoniae (strain ATCC BAA-255 / R6).